The chain runs to 445 residues: Phosphoglucosamine mutase (445 aa).

The Phosphoserine intermediate role is filled by Ser-99. Mg(2+) is bound by residues Ser-99, Asp-242, Asp-244, and Asp-246. The residue at position 99 (Ser-99) is a Phosphoserine.

Belongs to the phosphohexose mutase family. Mg(2+) serves as cofactor. Post-translationally, activated by phosphorylation.

It catalyses the reaction alpha-D-glucosamine 1-phosphate = D-glucosamine 6-phosphate. Catalyzes the conversion of glucosamine-6-phosphate to glucosamine-1-phosphate. This chain is Phosphoglucosamine mutase, found in Campylobacter jejuni (strain RM1221).